A 188-amino-acid chain; its full sequence is Elongation factor P (188 aa).

It belongs to the elongation factor P family.

The protein localises to the cytoplasm. The protein operates within protein biosynthesis; polypeptide chain elongation. In terms of biological role, involved in peptide bond synthesis. Stimulates efficient translation and peptide-bond synthesis on native or reconstituted 70S ribosomes in vitro. Probably functions indirectly by altering the affinity of the ribosome for aminoacyl-tRNA, thus increasing their reactivity as acceptors for peptidyl transferase. The protein is Elongation factor P of Gemmatimonas aurantiaca (strain DSM 14586 / JCM 11422 / NBRC 100505 / T-27).